A 270-amino-acid chain; its full sequence is Flavodoxin/ferredoxin--NADP reductase (270 aa).

The FAD-binding FR-type domain occupies V12–D113. FAD is bound by residues R62–S65, Y78–I80, and P86–T88. Position 126 (T126) interacts with NADP(+). T128 provides a ligand contact to FAD. NADP(+) contacts are provided by residues R156, T192–R193, R201, and D238. A264 to I270 contacts FAD.

It belongs to the ferredoxin--NADP reductase type 1 family. Monomer. Requires FAD as cofactor.

It localises to the cytoplasm. It catalyses the reaction 2 reduced [2Fe-2S]-[ferredoxin] + NADP(+) + H(+) = 2 oxidized [2Fe-2S]-[ferredoxin] + NADPH. The catalysed reaction is reduced [flavodoxin] + NADP(+) = oxidized [flavodoxin] + NADPH + 2 H(+). Functionally, transports electrons between flavodoxin or ferredoxin and NADPH. The chain is Flavodoxin/ferredoxin--NADP reductase from Rhodobacter capsulatus (Rhodopseudomonas capsulata).